The sequence spans 107 residues: N(4)-acetylcytidine amidohydrolase (107 aa).

The ASCH domain occupies 6 to 102; that stretch reads TFYRRFQADI…RLYVISFSLV (97 aa). Residue K20 is the Proton acceptor of the active site. T23 serves as the catalytic Nucleophile. E73 (proton donor) is an active-site residue.

Belongs to the N(4)-acetylcytidine amidohydrolase family.

It catalyses the reaction N(4)-acetylcytidine + H2O = cytidine + acetate + H(+). The enzyme catalyses N(4)-acetyl-2'-deoxycytidine + H2O = 2'-deoxycytidine + acetate + H(+). The catalysed reaction is N(4)-acetylcytosine + H2O = cytosine + acetate + H(+). Its function is as follows. Catalyzes the hydrolysis of N(4)-acetylcytidine (ac4C). This chain is N(4)-acetylcytidine amidohydrolase, found in Edwardsiella ictaluri (strain 93-146).